The following is a 199-amino-acid chain: uncharacterized protein (199 aa).

The next 4 membrane-spanning stretches (helical) occupy residues 41-61 (LFIP…AFIC), 72-92 (SLIC…CSPW), 109-129 (TVWV…SIFV), and 145-165 (VTYS…LLNL).

This sequence to M.pneumoniae MPN_037.

It localises to the cell membrane. This is an uncharacterized protein from Mycoplasma pneumoniae (strain ATCC 29342 / M129 / Subtype 1) (Mycoplasmoides pneumoniae).